The sequence spans 108 residues: Small ribosomal subunit protein uS10 (108 aa).

It belongs to the universal ribosomal protein uS10 family. Part of the 30S ribosomal subunit.

Functionally, involved in the binding of tRNA to the ribosomes. The protein is Small ribosomal subunit protein uS10 of Ehrlichia canis (strain Jake).